A 656-amino-acid chain; its full sequence is CoB--CoM heterodisulfide reductase iron-sulfur subunit A 2 (656 aa).

Position 152-175 (152-175 (GGGVSGIQAALDLADMGFEVILVE)) interacts with FAD. 4Fe-4S ferredoxin-type domains follow at residues 238-269 (KKPR…FDEG), 286-315 (SVFT…FDQE), 577-606 (IVSE…LVEK), and 610-639 (LVAE…QNHF). [4Fe-4S] cluster is bound by residues Cys248, Cys251, Cys254, Cys258, Cys295, Cys298, Cys301, Cys305, Cys586, Cys589, Cys592, Cys596, Cys619, Cys622, Cys625, and Cys629.

Belongs to the HdrA family. In terms of assembly, the ferredoxin:CoB-CoM heterodisulfide reductase is composed of three subunits; HdrA, HdrB and HdrC. [4Fe-4S] cluster serves as cofactor. The cofactor is FAD.

Its pathway is cofactor metabolism; coenzyme M-coenzyme B heterodisulfide reduction; coenzyme B and coenzyme M from coenzyme M-coenzyme B heterodisulfide: step 1/1. Functionally, part of a complex that catalyzes the reversible reduction of CoM-S-S-CoB to the thiol-coenzymes H-S-CoM (coenzyme M) and H-S-CoB (coenzyme B). The polypeptide is CoB--CoM heterodisulfide reductase iron-sulfur subunit A 2 (hdrA2) (Methanopyrus kandleri (strain AV19 / DSM 6324 / JCM 9639 / NBRC 100938)).